Here is a 503-residue protein sequence, read N- to C-terminus: ATP synthase subunit alpha (503 aa).

Residue 170–177 (GDRQTGKT) participates in ATP binding.

F-type ATPases have 2 components, CF(1) - the catalytic core - and CF(0) - the membrane proton channel. CF(1) has five subunits: alpha(3), beta(3), gamma(1), delta(1), epsilon(1). CF(0) has four main subunits: a(1), b(1), b'(1) and c(9-12).

The protein localises to the cellular thylakoid membrane. The catalysed reaction is ATP + H2O + 4 H(+)(in) = ADP + phosphate + 5 H(+)(out). Inhibited by dicyclohexylcarbodiimide. In terms of biological role, produces ATP from ADP in the presence of a proton gradient across the membrane. The alpha chain is a regulatory subunit. The complex from the organism is particularly stable to disruption and remains functional after 6 hrs at 55 degrees Celsius. The sequence is that of ATP synthase subunit alpha from Thermosynechococcus vestitus (strain NIES-2133 / IAM M-273 / BP-1).